The sequence spans 136 residues: Protein NrdI (136 aa).

It belongs to the NrdI family.

Its function is as follows. Probably involved in ribonucleotide reductase function. In Salmonella newport (strain SL254), this protein is Protein NrdI.